Here is a 389-residue protein sequence, read N- to C-terminus: 3-ketoacyl-CoA thiolase (389 aa).

The active-site Acyl-thioester intermediate is the cysteine 91. Catalysis depends on proton acceptor residues histidine 343 and cysteine 373.

It belongs to the thiolase-like superfamily. Thiolase family. In terms of assembly, heterotetramer of two alpha chains (FadB) and two beta chains (FadA).

It localises to the cytoplasm. It catalyses the reaction an acyl-CoA + acetyl-CoA = a 3-oxoacyl-CoA + CoA. The protein operates within lipid metabolism; fatty acid beta-oxidation. Catalyzes the final step of fatty acid oxidation in which acetyl-CoA is released and the CoA ester of a fatty acid two carbons shorter is formed. This chain is 3-ketoacyl-CoA thiolase, found in Pseudoalteromonas translucida (strain TAC 125).